A 60-amino-acid chain; its full sequence is Large ribosomal subunit protein uL30 (60 aa).

This sequence belongs to the universal ribosomal protein uL30 family. In terms of assembly, part of the 50S ribosomal subunit.

This Lachnoclostridium phytofermentans (strain ATCC 700394 / DSM 18823 / ISDg) (Clostridium phytofermentans) protein is Large ribosomal subunit protein uL30.